A 244-amino-acid polypeptide reads, in one-letter code: Krueppel-like factor 9 (244 aa).

2 disordered regions span residues 24-51 and 79-143; these read VPEH…GDPG and PSVC…EKRH. A compositionally biased stretch (basic and acidic residues) spans 32–51; it reads DAERLRLPEREVTKEHGDPG. Ser122 is subject to Phosphoserine. Basic residues predominate over residues 134–143; that stretch reads KGKHASEKRH. 3 consecutive C2H2-type zinc fingers follow at residues 143 to 167, 173 to 197, and 203 to 225; these read HKCP…YRVH, FPCT…YRTH, and FRCP…ARRH.

The protein belongs to the Sp1 C2H2-type zinc-finger protein family. As to quaternary structure, interacts with ZZEF1.

It is found in the nucleus. Its function is as follows. Transcription factor that binds to GC box promoter elements. Selectively activates mRNA synthesis from genes containing tandem repeats of GC boxes but represses genes with a single GC box. Acts as an epidermal circadian transcription factor regulating keratinocyte proliferation. The protein is Krueppel-like factor 9 (Klf9) of Rattus norvegicus (Rat).